The sequence spans 262 residues: 4-hydroxy-2-oxo-heptane-1,7-dioate aldolase (262 aa).

His45 (proton acceptor) is an active-site residue. Position 147 (Gln147) interacts with substrate. Glu149 is an a divalent metal cation binding site. Residues Ala174 and Asp175 each contribute to the substrate site. Asp175 is a binding site for a divalent metal cation.

The protein belongs to the HpcH/HpaI aldolase family. In terms of assembly, homohexamer; trimer of dimers. It depends on a divalent metal cation as a cofactor.

It carries out the reaction 4-hydroxy-2-oxoheptanedioate = succinate semialdehyde + pyruvate. The enzyme catalyses D-glyceraldehyde + 3-hydroxypyruvate = (3R,4S,5R)-3,4,5,6-tetrahydroxy-2-oxohexanoate. It catalyses the reaction D-glyceraldehyde + 3-hydroxypyruvate = 2-dehydro-D-gluconate. The catalysed reaction is D-glyceraldehyde + 3-hydroxypyruvate = 2-dehydro-D-galactonate. It carries out the reaction D-glyceraldehyde + pyruvate = 2-dehydro-3-deoxy-L-galactonate. The enzyme catalyses 2-dehydro-3-deoxy-D-gluconate = D-glyceraldehyde + pyruvate. The protein operates within aromatic compound metabolism; 4-hydroxyphenylacetate degradation; pyruvate and succinate semialdehyde from 4-hydroxyphenylacetate: step 7/7. Its function is as follows. Catalyzes the reversible retro-aldol cleavage of 4-hydroxy-2-ketoheptane-1,7-dioate (HKHD) to pyruvate and succinic semialdehyde. In vitro, can catalyze the aldolisation reaction between hydroxypyruvate (HPA) or pyruvate (PA) and D-glyceraldehyde (D-GA). The condensation of hydroxypyruvate and D-glyceraldehyde produces (3R,4S,5R)-3,4,5,6-tetrahydroxy-2-oxohexanoate as the major product, 2-dehydro-D-gluconate and 2-dehydro-D-galactonate. The condensation of pyruvate and D-glyceraldehyde produces 2-dehydro-3-deoxy-L-galactonate as the major product and 2-dehydro-3-deoxy-D-gluconate. The sequence is that of 4-hydroxy-2-oxo-heptane-1,7-dioate aldolase from Escherichia coli (strain ATCC 8739 / DSM 1576 / NBRC 3972 / NCIMB 8545 / WDCM 00012 / Crooks).